Consider the following 595-residue polypeptide: Chaperone protein HscA homolog (595 aa).

The protein belongs to the heat shock protein 70 family.

In terms of biological role, chaperone involved in the maturation of iron-sulfur cluster-containing proteins. Has a low intrinsic ATPase activity which is markedly stimulated by HscB. The protein is Chaperone protein HscA homolog of Rickettsia rickettsii (strain Iowa).